A 126-amino-acid chain; its full sequence is Protein ApaG (126 aa).

One can recognise an ApaG domain in the interval 2–126 (DVSQPRIQIQ…FRLAVPNILN (125 aa)).

This chain is Protein ApaG, found in Vibrio vulnificus (strain CMCP6).